The following is a 536-amino-acid chain: Caspase recruitment domain-containing protein 9 (536 aa).

Serine 2 is modified (phosphoserine). The Zn(2+) site is built by aspartate 3, cysteine 10, and histidine 73. Residues 6–98 enclose the CARD domain; that stretch reads NDDECWSVLE…QLYKKVTGKE (93 aa). Positions 99–116 are linker; that stretch reads PARVFSMIIDASGESGLT. 2 coiled-coil regions span residues 117–277 and 332–419; these read QLLM…DRSS and LRKD…QQLE. Residue lysine 125 forms a Glycyl lysine isopeptide (Lys-Gly) (interchain with G-Cter in ubiquitin) linkage. A Phosphothreonine modification is found at threonine 231. Serine 277 carries the phosphoserine modification. Residues serine 424, serine 425, serine 431, serine 450, serine 460, serine 483, and serine 498 each carry the phosphoserine modification. The tract at residues 427 to 536 is disordered; that stretch reads LEDGSPRRSQ…GSDNTDTEGS (110 aa). Residues 487 to 502 are compositionally biased toward basic and acidic residues; that stretch reads PPEKERRRLKESFENY. Residues 503–513 show a composition bias toward basic residues; it reads RRKRALRKMQK. Threonine 531 and threonine 533 each carry phosphothreonine; by CK2.

In terms of assembly, monomer. Homodimer; homodimerization is mediated by the CARD domain which forms an extensive interaction with the adjacent linker and coiled-coil regions; leads to an autoinhibited state. Homomultimer; polymerizes following activation, forming a nucleating helical template that seeds BCL10-filament formation via a CARD-CARD interaction. Interacts (via CARD domain) with BCL10 (via CARD domain); interaction takes place following CARD9 activation and polymerization, leading to the formation of a filamentous CBM complex assembly. Component of a CBM complex (CARD9-BCL10, MALT1), composed of CARD9, BCL10 and MALT1. Interacts with RASGRF1. Interacts with NOD2 (via NACHT domain); interaction is direct. Interacts with RIPK2. Interacts with VHL; without leading to protein degradation. In terms of processing, phosphorylated at Thr-231 by PRKCD downstream of C-type lectin receptors activation: phosphorylation promotes interaction with BCL10, followed by activation of NF-kappa-B and MAP kinase p38 pathways. Phosphorylated at Thr-531 and Thr-533 by CK2 following interaction with VHL, leading to inhibit the ability to activate NF-kappa-B. Post-translationally, ubiquitinated at Lys-125 via 'Lys-27'-linked ubiquitin by TRIM62 downstream of C-type lectin receptors activation; leading to CARD9 activation, followed by activation of NF-kappa-B and MAP kinase p38 pathways. Deubiquitinated at Lys-125 by USP15, inhibiting CARD9. As to expression, expression is restricted to several populations of phagocytes, such as macrophages, monocytes, and dendritic cells. Highly expressed in spleen. Also detected in liver, placenta, lung, peripheral blood leukocytes and in brain.

The protein localises to the cytoplasm. Maintained in an autoinhibited state via homodimerization in which the CARD domain forms an extensive interaction with the adjacent linker and coiled-coil regions. Activation downstream of C-type lectin receptors, by phosphorylation by PRKCD and/or ubiquitination by TRIM62, triggers disruption of the CARD domain-coiled coil interface, CARD9 homooligomerization and BCL10 recruitment, followed by activation of NF-kappa-B and MAP kinase p38 pathways. Zinc-binding inhibits activation by stabilizing the CARD ground-state conformation and restricting its capacity to form BCL10-nucleating filaments. Functionally, adapter protein that plays a key role in innate immune response against fungi by forming signaling complexes downstream of C-type lectin receptors. CARD9-mediated signals are essential for antifungal immunity against a subset of fungi from the phylum Ascomycota. Transduces signals in myeloid cells downstream of C-type lectin receptors CLEC7A (dectin-1), CLEC6A (dectin-2) and CLEC4E (Mincle), which detect pathogen-associated molecular pattern metabolites (PAMPs), such as fungal carbohydrates, and trigger CARD9 activation. Upon activation, CARD9 homooligomerizes to form a nucleating helical template that recruits BCL10 via CARD-CARD interaction, thereby promoting polymerization of BCL10 and subsequent recruitment of MALT1: this leads to activation of NF-kappa-B and MAP kinase p38 (MAPK11, MAPK12, MAPK13 and/or MAPK14) pathways which stimulate expression of genes encoding pro-inflammatory cytokines and chemokines. CARD9 signaling in antigen-presenting cells links innate sensing of fungi to the activation of adaptive immunity and provides a cytokine milieu that induces the development and subsequent of interleukin 17-producing T helper (Th17) cells. Also involved in activation of myeloid cells via classical ITAM-associated receptors and TLR: required for TLR-mediated activation of MAPK, while it is not required for TLR-induced activation of NF-kappa-B. CARD9 can also be engaged independently of BCL10: forms a complex with RASGRF1 downstream of C-type lectin receptors, which recruits and activates HRAS, leading to ERK activation and the production of cytokines. Acts as an important regulator of the intestinal commensal fungi (mycobiota) component of the gut microbiota. Plays an essential role in antifungal immunity against dissemination of gut fungi: acts by promoting induction of antifungal IgG antibodies response in CX3CR1(+) macrophages to confer protection against disseminated C.albicans or C.auris infection. Also mediates immunity against other pathogens, such as certain bacteria, viruses and parasites; CARD9 signaling is however redundant with other innate immune responses. In response to L.monocytogenes infection, required for the production of inflammatory cytokines activated by intracellular peptidoglycan: acts by connecting NOD2 recognition of peptidoglycan to downstream activation of MAP kinases (MAPK) without activating NF-kappa-B. This is Caspase recruitment domain-containing protein 9 from Homo sapiens (Human).